We begin with the raw amino-acid sequence, 318 residues long: 2-oxoacid:ferredoxin oxidoreductase 1, subunit beta (318 aa).

C18, C21, and C52 together coordinate [4Fe-4S] cluster. Thiamine diphosphate is bound by residues 50–53 (IGCS) and H69. A Mg(2+)-binding site is contributed by D94. Position 95-96 (95-96 (GD)) interacts with thiamine diphosphate. Mg(2+) is bound by residues N122 and V124. 126 to 127 (GL) serves as a coordination point for thiamine diphosphate. C201 serves as a coordination point for [4Fe-4S] cluster.

In terms of assembly, heterodimer composed of an alpha and a beta subunit. The cofactor is [4Fe-4S] cluster. Requires thiamine diphosphate as cofactor. Mg(2+) serves as cofactor.

It catalyses the reaction a 2-oxocarboxylate + 2 oxidized [2Fe-2S]-[ferredoxin] + CoA = an acyl-CoA + 2 reduced [2Fe-2S]-[ferredoxin] + CO2 + H(+). Its function is as follows. Catalyzes the coenzyme A-dependent oxidative decarboxylation of different 2-oxoacids such as pyruvate, 2-oxobutyrate and glyoxylate to form their CoA derivatives. This chain is 2-oxoacid:ferredoxin oxidoreductase 1, subunit beta, found in Aeropyrum pernix (strain ATCC 700893 / DSM 11879 / JCM 9820 / NBRC 100138 / K1).